We begin with the raw amino-acid sequence, 539 residues long: Chaperonin GroEL (539 aa).

ATP is bound by residues 29–32 (TLGP), 86–90 (DGTTT), glycine 413, and aspartate 494.

It belongs to the chaperonin (HSP60) family. In terms of assembly, forms a cylinder of 14 subunits composed of two heptameric rings stacked back-to-back. Interacts with the co-chaperonin GroES.

The protein localises to the cytoplasm. The enzyme catalyses ATP + H2O + a folded polypeptide = ADP + phosphate + an unfolded polypeptide.. Its function is as follows. Together with its co-chaperonin GroES, plays an essential role in assisting protein folding. The GroEL-GroES system forms a nano-cage that allows encapsulation of the non-native substrate proteins and provides a physical environment optimized to promote and accelerate protein folding. The polypeptide is Chaperonin GroEL (Finegoldia magna (strain ATCC 29328 / DSM 20472 / WAL 2508) (Peptostreptococcus magnus)).